We begin with the raw amino-acid sequence, 138 residues long: Large ribosomal subunit protein uL16 (138 aa).

Belongs to the universal ribosomal protein uL16 family. As to quaternary structure, part of the 50S ribosomal subunit.

Functionally, binds 23S rRNA and is also seen to make contacts with the A and possibly P site tRNAs. In Chlamydia muridarum (strain MoPn / Nigg), this protein is Large ribosomal subunit protein uL16.